The chain runs to 301 residues: MPNAIHALVTESRNPFSTHIDQLSTLDMLAVINQEDQKVPFAIENVLPEIAQAVDAIAETFMKNGRLIYLGAGTSGRLGILDASECPPTFGTPHEQVVGLIAGGQQAILKAVENAEDDRSAGEQDLRNLALNEKDVVVGIAASGRTPYVLAGIEYANHVGCVTVGISCNPDSALAALANIAITPIVGPEVITGSSRMKAGTAQKLILNMLTTGAMIKTGKVFGNLMVDVVATNEKLVERQKNIVMEVTQCDRQQAEQALLQSNGQCKVAIVMLLLNMSAEEAKNCLAQANGFIHQALTLVK.

The region spanning 57-220 (IAETFMKNGR…TTGAMIKTGK (164 aa)) is the SIS domain. The Proton donor role is filled by Glu85. Glu116 is an active-site residue.

Belongs to the GCKR-like family. MurNAc-6-P etherase subfamily. Homodimer.

It catalyses the reaction N-acetyl-D-muramate 6-phosphate + H2O = N-acetyl-D-glucosamine 6-phosphate + (R)-lactate. Its pathway is amino-sugar metabolism; 1,6-anhydro-N-acetylmuramate degradation. It functions in the pathway amino-sugar metabolism; N-acetylmuramate degradation. The protein operates within cell wall biogenesis; peptidoglycan recycling. In terms of biological role, specifically catalyzes the cleavage of the D-lactyl ether substituent of MurNAc 6-phosphate, producing GlcNAc 6-phosphate and D-lactate. Together with AnmK, is also required for the utilization of anhydro-N-acetylmuramic acid (anhMurNAc) either imported from the medium or derived from its own cell wall murein, and thus plays a role in cell wall recycling. The protein is N-acetylmuramic acid 6-phosphate etherase of Pasteurella multocida (strain Pm70).